An 84-amino-acid polypeptide reads, in one-letter code: Small ribosomal subunit protein uS17 (84 aa).

It belongs to the universal ribosomal protein uS17 family. As to quaternary structure, part of the 30S ribosomal subunit.

One of the primary rRNA binding proteins, it binds specifically to the 5'-end of 16S ribosomal RNA. The polypeptide is Small ribosomal subunit protein uS17 (Borrelia garinii subsp. bavariensis (strain ATCC BAA-2496 / DSM 23469 / PBi) (Borreliella bavariensis)).